Here is a 92-residue protein sequence, read N- to C-terminus: Small ribosomal subunit protein uS19c (92 aa).

It belongs to the universal ribosomal protein uS19 family.

The protein localises to the plastid. The protein resides in the chloroplast. Protein S19 forms a complex with S13 that binds strongly to the 16S ribosomal RNA. The sequence is that of Small ribosomal subunit protein uS19c from Piper cenocladum (Ant piper).